Reading from the N-terminus, the 590-residue chain is Oleate hydratase (590 aa).

Residues alanine 33, glutamate 56, serine 64, and glutamate 82 each coordinate FAD. Glutamate 82 acts as the Proton acceptor in catalysis. Catalysis depends on tyrosine 200, which acts as the Proton donor. Valine 249, serine 291, threonine 508, and serine 512 together coordinate FAD.

It belongs to the oleate hydratase family. Monomer and homodimer. Both forms seem to be active. It depends on FAD as a cofactor.

The catalysed reaction is (R)-10-hydroxyoctadecanoate = (9Z)-octadecenoate + H2O. It carries out the reaction (9Z)-octadecenoate + H2O = 10-hydroxyoctadecanoate. It catalyses the reaction (9Z)-hexadecenoate + H2O = 10-hydroxyhexadecanoate. The enzyme catalyses (9Z,12Z)-octadecadienoate + H2O = (12Z)-10-hydroxyoctadecenoate. The catalysed reaction is (12Z)-10-hydroxyoctadecenoate + H2O = 10,13-dihydroxyoctadecanoate. It carries out the reaction (9Z,12Z,15Z)-octadecatrienoate + H2O = (12Z,15Z)-10-hydroxyoctadecadienoate. It participates in lipid metabolism; fatty acid metabolism. In terms of biological role, catalyzes the hydration of oleate at its cis-9-double bond to yield 10-hydroxyoctadecanoate, probably in the (R) configuration, and of linoleate at its cis-9- and cis-12-double bond to yield 10-hydroxy-12-octadecenoate and 10,13-dihydroxyoctadecanoate. Is not active on trans-double bonds and esterified fatty acids as substrate; is only active on cis-9- and/or cis-12-double bond of C16 and C18 fatty acids without any trans-configurations, producing 10-hydroxy and 10,13-dihydroxy derivatives. Appears to play a role in oleic acid detoxification and bacterial virulence. The chain is Oleate hydratase (sph) from Streptococcus pyogenes serotype M49 (strain NZ131).